The primary structure comprises 89 residues: Small ribosomal subunit protein uS15 (89 aa).

Belongs to the universal ribosomal protein uS15 family. As to quaternary structure, part of the 30S ribosomal subunit. Forms a bridge to the 50S subunit in the 70S ribosome, contacting the 23S rRNA.

In terms of biological role, one of the primary rRNA binding proteins, it binds directly to 16S rRNA where it helps nucleate assembly of the platform of the 30S subunit by binding and bridging several RNA helices of the 16S rRNA. Its function is as follows. Forms an intersubunit bridge (bridge B4) with the 23S rRNA of the 50S subunit in the ribosome. The sequence is that of Small ribosomal subunit protein uS15 from Trichormus variabilis (strain ATCC 29413 / PCC 7937) (Anabaena variabilis).